We begin with the raw amino-acid sequence, 382 residues long: Apolipoprotein A-IV (382 aa).

Residues 1–20 (MFLRAVVLTLALVAVTGARA) form the signal peptide. 13 consecutive repeat copies span residues 33-54 (DYFS…QSEL), 60-81 (ALFQ…KKLV), 82-103 (PFAT…EEIR), 115-136 (PHAN…QRLG), 137-158 (PYAD…RHLT), 159-180 (SHAQ…SSLT), 181-202 (PYAD…GHLT), 203-224 (PYAD…RSLA), 225-246 (PYAQ…FQMK), 247-268 (KNAE…QRLA), 269-286 (PVVE…KGLQ), 287-308 (ESLA…HNMG), and 309-330 (PYGD…QKLG). The 13 X 22 AA approximate tandem repeats stretch occupies residues 33–330 (DYFSQLSNNA…QVEELRQKLG (298 aa)). Residues 362 to 382 (ENQDMPLALPEQEQAPGPLES) are disordered.

The protein belongs to the apolipoprotein A1/A4/E family. Homodimer.

The protein resides in the secreted. May have a role in chylomicrons and VLDL secretion and catabolism. Required for efficient activation of lipoprotein lipase by ApoC-II; potent activator of LCAT. Apoa-IV is a major component of HDL and chylomicrons. The sequence is that of Apolipoprotein A-IV (APOA4) from Acinonyx jubatus (Cheetah).